A 368-amino-acid chain; its full sequence is Probable dual-specificity RNA methyltransferase RlmN (368 aa).

Residue E108 is the Proton acceptor of the active site. A Radical SAM core domain is found at 114–345 (HAYGNSVCVS…VTVRRGLGAD (232 aa)). Residues C121 and C350 are joined by a disulfide bond. [4Fe-4S] cluster is bound by residues C128, C132, and C135. Residues 175–176 (GE), S207, 230–232 (SLH), and N307 each bind S-adenosyl-L-methionine. The active-site S-methylcysteine intermediate is C350.

The protein belongs to the radical SAM superfamily. RlmN family. [4Fe-4S] cluster is required as a cofactor.

The protein localises to the cytoplasm. It carries out the reaction adenosine(2503) in 23S rRNA + 2 reduced [2Fe-2S]-[ferredoxin] + 2 S-adenosyl-L-methionine = 2-methyladenosine(2503) in 23S rRNA + 5'-deoxyadenosine + L-methionine + 2 oxidized [2Fe-2S]-[ferredoxin] + S-adenosyl-L-homocysteine. The enzyme catalyses adenosine(37) in tRNA + 2 reduced [2Fe-2S]-[ferredoxin] + 2 S-adenosyl-L-methionine = 2-methyladenosine(37) in tRNA + 5'-deoxyadenosine + L-methionine + 2 oxidized [2Fe-2S]-[ferredoxin] + S-adenosyl-L-homocysteine. Functionally, specifically methylates position 2 of adenine 2503 in 23S rRNA and position 2 of adenine 37 in tRNAs. In Pelotomaculum thermopropionicum (strain DSM 13744 / JCM 10971 / SI), this protein is Probable dual-specificity RNA methyltransferase RlmN.